Consider the following 331-residue polypeptide: Quinone oxidoreductase (331 aa).

An N-acetylalanine modification is found at Ala2. Lys23 is subject to N6-acetyllysine. Position 35 is a phosphoserine (Ser35). NADP(+) contacts are provided by residues Tyr53, 158–161 (SGGV), and Gly181. Lys186 bears the N6-acetyllysine mark. Residues His200, Asn231, 248-251 (VGCR), and 271-273 (VSL) each bind NADP(+). Lys298 bears the N6-succinyllysine mark.

Belongs to the zinc-containing alcohol dehydrogenase family. Quinone oxidoreductase subfamily. Homotetramer.

The protein resides in the cytoplasm. The catalysed reaction is 2 a quinone + NADPH + H(+) = 2 a 1,4-benzosemiquinone + NADP(+). Functionally, does not have alcohol dehydrogenase activity. Binds NADP and acts through a one-electron transfer process. Orthoquinones, such as 1,2-naphthoquinone or 9,10-phenanthrenequinone, are the best substrates (in vitro). May act in the detoxification of xenobiotics. Interacts with (AU)-rich elements (ARE) in the 3'-UTR of target mRNA species and enhances their stability. NADPH binding interferes with mRNA binding. The sequence is that of Quinone oxidoreductase (Cryz) from Mus musculus (Mouse).